A 214-amino-acid chain; its full sequence is Adenylate kinase (214 aa).

Residue 10 to 15 coordinates ATP; that stretch reads GAGKGT. The segment at 30-59 is NMP; sequence STGDMFRDHKARGTEIGKQVQAIMDAGGLV. AMP contacts are provided by residues Thr-31, Arg-36, 57–59, 85–88, and Gln-92; these read GLV and GYPR. Positions 126-163 are LID; sequence GRRSCPRCGAVYHVSQNPPHRAGFCDRDDTALVQREDD. Arg-127 is an ATP binding site. Residues Cys-130 and Cys-133 each coordinate Zn(2+). 136 to 137 contacts ATP; sequence VY. 2 residues coordinate Zn(2+): Cys-150 and Asp-153. Arg-160 and Arg-171 together coordinate AMP. Gly-199 provides a ligand contact to ATP.

This sequence belongs to the adenylate kinase family. In terms of assembly, monomer.

It localises to the cytoplasm. The catalysed reaction is AMP + ATP = 2 ADP. It participates in purine metabolism; AMP biosynthesis via salvage pathway; AMP from ADP: step 1/1. In terms of biological role, catalyzes the reversible transfer of the terminal phosphate group between ATP and AMP. Plays an important role in cellular energy homeostasis and in adenine nucleotide metabolism. The chain is Adenylate kinase from Anaeromyxobacter sp. (strain K).